The sequence spans 440 residues: MNKFRTFPQINTLIEDESLKSYPFYIKVFFCKKVVAKLKENFSQDEISKDKLLLEIKKEIKTFYRKDLQSVINASGVVIHTNLGRSVIHEELYEACKDIICNYSNVEFDLENGKRGSRYALVLEKLKMLFECEDALVVNNNAAAVFLVLNSLCYDKEVISSRGELVEIGGSFRVPEVIKAAGVKLCEVGTSNKTHLKDYEQAIGENTALILKTHKSNFALMGFHSEVNIKDLHELAKEKGLLSYYDLGSGWCENLNEKLIKNEPKIKKLVQECDILSFSGDKLFGSAQAGIILGKKELIEKLKQNQLLRMLRVDKLTLSFLNESLKAYLQKDYKKIITLKLLNDDLSFIEKKALRVQKELNFQTQLKKSKSLVGGGSMPDKSLDTYILTFQGDALKLQTRFRKENIIGRIENDEFVLDFRTIRENELQKLILTINQMENL.

N6-(pyridoxal phosphate)lysine is present on Lys282.

The protein belongs to the SelA family. Pyridoxal 5'-phosphate serves as cofactor.

The protein resides in the cytoplasm. It catalyses the reaction L-seryl-tRNA(Sec) + selenophosphate + H(+) = L-selenocysteinyl-tRNA(Sec) + phosphate. It participates in aminoacyl-tRNA biosynthesis; selenocysteinyl-tRNA(Sec) biosynthesis; selenocysteinyl-tRNA(Sec) from L-seryl-tRNA(Sec) (bacterial route): step 1/1. In terms of biological role, converts seryl-tRNA(Sec) to selenocysteinyl-tRNA(Sec) required for selenoprotein biosynthesis. The polypeptide is L-seryl-tRNA(Sec) selenium transferase (Campylobacter jejuni (strain RM1221)).